A 323-amino-acid chain; its full sequence is Cytosolic sulfotransferase 5 (323 aa).

Residue K69–W74 coordinates 3'-phosphoadenylyl sulfate. The active-site Proton acceptor is the H135. Residues R157, S165, and R289 to G291 contribute to the 3'-phosphoadenylyl sulfate site.

Belongs to the sulfotransferase 1 family. As to expression, expressed in inflorescence stems, roots and siliques.

The protein resides in the cytoplasm. Its function is as follows. Sulfotransferase that utilizes 3'-phospho-5'-adenylyl sulfate (PAPS) as sulfonate donor to specifically catalyze the sulfate conjugation of flavones and flavonols. Strictly specific for the position 7. Substrate preference is kaempferol 3-sulfate &gt; isorhamnetin &gt; kaempferol. The protein is Cytosolic sulfotransferase 5 (SOT5) of Arabidopsis thaliana (Mouse-ear cress).